Reading from the N-terminus, the 73-residue chain is Putative defensin-like protein 42 (73 aa).

Disulfide bonds link Cys6-Cys58, Cys18-Cys41, Cys27-Cys50, and Cys31-Cys52.

It belongs to the DEFL family.

The protein is Putative defensin-like protein 42 of Arabidopsis thaliana (Mouse-ear cress).